Here is a 181-residue protein sequence, read N- to C-terminus: Inner membrane-spanning protein YciB (181 aa).

The next 5 membrane-spanning stretches (helical) occupy residues 3 to 23, 49 to 69, 76 to 96, 119 to 139, and 149 to 169; these read FLFD…YGIY, TMLW…LILQ, WKPS…QAIF, VNAS…YVAF, and FKLF…GLML.

It belongs to the YciB family.

It localises to the cell inner membrane. Its function is as follows. Plays a role in cell envelope biogenesis, maintenance of cell envelope integrity and membrane homeostasis. The protein is Inner membrane-spanning protein YciB of Nitrosospira multiformis (strain ATCC 25196 / NCIMB 11849 / C 71).